The primary structure comprises 421 residues: Serine hydroxymethyltransferase (421 aa).

Residues Leu121 and 125–127 (GHL) each bind (6S)-5,6,7,8-tetrahydrofolate. Lys229 carries the post-translational modification N6-(pyridoxal phosphate)lysine.

This sequence belongs to the SHMT family. Homodimer. Pyridoxal 5'-phosphate is required as a cofactor.

It is found in the cytoplasm. The enzyme catalyses (6R)-5,10-methylene-5,6,7,8-tetrahydrofolate + glycine + H2O = (6S)-5,6,7,8-tetrahydrofolate + L-serine. Its pathway is one-carbon metabolism; tetrahydrofolate interconversion. It participates in amino-acid biosynthesis; glycine biosynthesis; glycine from L-serine: step 1/1. Catalyzes the reversible interconversion of serine and glycine with tetrahydrofolate (THF) serving as the one-carbon carrier. This reaction serves as the major source of one-carbon groups required for the biosynthesis of purines, thymidylate, methionine, and other important biomolecules. Also exhibits THF-independent aldolase activity toward beta-hydroxyamino acids, producing glycine and aldehydes, via a retro-aldol mechanism. This chain is Serine hydroxymethyltransferase, found in Actinobacillus pleuropneumoniae serotype 7 (strain AP76).